A 161-amino-acid polypeptide reads, in one-letter code: Nucleotide-binding protein BTH_I0730 (161 aa).

It belongs to the YajQ family.

In terms of biological role, nucleotide-binding protein. The protein is Nucleotide-binding protein BTH_I0730 of Burkholderia thailandensis (strain ATCC 700388 / DSM 13276 / CCUG 48851 / CIP 106301 / E264).